The chain runs to 472 residues: Cysteine--tRNA ligase (472 aa).

Cys-29 contributes to the Zn(2+) binding site. The 'HIGH' region signature appears at 31 to 41; sequence PTVYNYIHIGN. The Zn(2+) site is built by Cys-214, His-239, and Glu-243. The 'KMSKS' region motif lies at 273-277; that stretch reads KMSKS. Residue Lys-276 coordinates ATP.

Belongs to the class-I aminoacyl-tRNA synthetase family. Monomer. It depends on Zn(2+) as a cofactor.

The protein localises to the cytoplasm. The catalysed reaction is tRNA(Cys) + L-cysteine + ATP = L-cysteinyl-tRNA(Cys) + AMP + diphosphate. The sequence is that of Cysteine--tRNA ligase from Lactobacillus gasseri (strain ATCC 33323 / DSM 20243 / BCRC 14619 / CIP 102991 / JCM 1131 / KCTC 3163 / NCIMB 11718 / NCTC 13722 / AM63).